Here is a 512-residue protein sequence, read N- to C-terminus: Protein SHC1 (512 aa).

Over residues 101 to 113 (EQDEFENDVEDDA) the composition is skewed to acidic residues. Disordered regions lie at residues 101 to 122 (EQDE…EKSQ) and 144 to 165 (DGNS…SVAL). Sel1-like repeat units follow at residues 318–353 (PDAQ…KRLH), 354–389 (IESV…TKNH), 390–429 (PAAM…SMAS), and 433–470 (CGAP…ALGH).

The protein belongs to the SKT5 family.

It is found in the cytoplasm. The protein resides in the cytoplasmic granule membrane. Functionally, required for the activation of chitin synthase III (CHS3) activity during the sporulation process. The polypeptide is Protein SHC1 (SHC1) (Saccharomyces cerevisiae (strain YJM789) (Baker's yeast)).